A 663-amino-acid polypeptide reads, in one-letter code: Transcriptional repressor CTCFL (663 aa).

Over residues 24 to 51 the composition is skewed to basic and acidic residues; it reads EKGLKEEEKDGVCREKDHRSPSELEAER. Disordered stretches follow at residues 24 to 55 and 221 to 250; these read EKGL…TSGA and NSNV…QRKT. 10 consecutive C2H2-type zinc fingers follow at residues 257-279, 285-307, 313-336, 342-364, 370-392, 398-421, 428-451, 458-480, 486-508, and 514-537; these read FHCD…MKTH, HLCH…VNTH, YKCN…RYKH, FKCS…VRSH, FQCC…MRTH, YECH…LQKH, YQCP…RNLH, LKCR…QKTH, FKCK…IRTH, and FTCL…RKYH. The segment at 546 to 568 adopts a C2H2-type 11; atypical zinc-finger fold; the sequence is YKCSKCGKGFSRWINLHRHSEKC. The interval 569–630 is disordered; it reads GSGEAKSAAS…STTKGEQFPG (62 aa). Positions 580–590 are enriched in basic residues; the sequence is KGRRTRKRKQT. The segment covering 594–607 has biased composition (basic and acidic residues); that stretch reads EATKGQKEAAKGWK. Residues 608–620 are compositionally biased toward low complexity; sequence EAANGDEAAAEEA.

It belongs to the CTCF zinc-finger protein family. Interacts with histones, PRMT7 and SETD1A. Interacts (via N-terminus) with BAG6/BAT3. As to expression, testis specific. Specifically expressed in primary spermatocytes.

Its subcellular location is the cytoplasm. It localises to the nucleus. Functionally, testis-specific DNA binding protein responsible for insulator function, nuclear architecture and transcriptional control, which probably acts by recruiting epigenetic chromatin modifiers. Plays a key role in gene imprinting in male germline, by participating in the establishment of differential methylation at the IGF2/H19 imprinted control region (ICR). Directly binds the unmethylated H19 ICR and recruits the PRMT7 methyltransferase, leading to methylate histone H4 'Arg-3' to form H4R3sme2. This probably leads to recruit de novo DNA methyltransferases at these sites. Seems to act as tumor suppressor. In association with DNMT1 and DNMT3B, involved in activation of BAG1 gene expression by binding to its promoter. Required for dimethylation of H3 lysine 4 (H3K4me2) of MYC and BRCA1 promoters. The polypeptide is Transcriptional repressor CTCFL (CTCFL) (Homo sapiens (Human)).